The chain runs to 844 residues: Meiotically up-regulated gene 61 protein (844 aa).

2 disordered regions span residues 333 to 354 (ENNS…PQSQ) and 384 to 415 (NFGL…EISS). Over residues 384 to 394 (NFGLEASNTST) the composition is skewed to polar residues. Basic and acidic residues predominate over residues 395–407 (PEKKKFDSQKPDD). Residues 459–479 (VVNSLWLVLLVVPLLGFVGFW) traverse the membrane as a helical segment. Residue 605-612 (AKNLNGKS) coordinates ATP. The helical transmembrane segment at 705–725 (VISCWRIYLLIGILAAITGTV) threads the bilayer.

In terms of assembly, interacts with sad1.

The protein resides in the endoplasmic reticulum membrane. The protein localises to the nucleus membrane. In terms of biological role, required for correct meiotic chromosome segregation. The chain is Meiotically up-regulated gene 61 protein (mug61) from Schizosaccharomyces pombe (strain 972 / ATCC 24843) (Fission yeast).